A 334-amino-acid chain; its full sequence is O(6)-methylguanine-induced apoptosis 2 (334 aa).

A disordered region spans residues 1–60; the sequence is MDNSAQKNERTGKHPRRASEVQKGFTAAYPTQSSIPFKSQASVIPESEKKGFNSQAKRFP. A compositionally biased stretch (basic and acidic residues) spans 7–20; that stretch reads KNERTGKHPRRASE. A compositionally biased stretch (polar residues) spans 29–42; that stretch reads YPTQSSIPFKSQAS. STPGR repeat units lie at residues 67 to 74, 109 to 117, 148 to 155, 187 to 206, 225 to 257, 267 to 282, and 306 to 316; these read PGPGFYNV, PAANAYTIP, PAPNYYNA, GPPP…SPNT, GPGP…SAQP, PGPG…GPRK, and LPGPATYKPEL. Residue Tyr72 is modified to Phosphotyrosine.

Belongs to the STPG1 family.

The protein resides in the cytoplasm. The protein localises to the nucleus. Functionally, may positively contribute to the induction of apoptosis triggered by O(6)-methylguanine. This Homo sapiens (Human) protein is O(6)-methylguanine-induced apoptosis 2 (STPG1).